The sequence spans 1060 residues: Protein FAM184B (1060 aa).

The span at 1–17 (MASALNSKINPPGTCQG) shows a compositional bias: polar residues. Residues 1–24 (MASALNSKINPPGTCQGSKADGGA) form a disordered region. A coiled-coil region spans residues 51–159 (ALNTRQDEAE…EMLELKADYE (109 aa)). The tract at residues 165–191 (LTSHEATPQGRLPQESPETKSEPGQGP) is disordered. 2 coiled-coil regions span residues 192 to 333 (EMQE…DRMM) and 402 to 502 (MKQQ…RLEE). Disordered stretches follow at residues 532-566 (QDPC…EERT), 681-700 (TEER…HQTH), and 762-803 (GRQQ…GSGE). Basic and acidic residues-rich tracts occupy residues 536 to 554 (LKLD…KLAA), 681 to 690 (TEERLKKESS), and 773 to 785 (DSKD…EERG). Positions 584-769 (LKEKTSKIQR…ALGRQQASSQ (186 aa)) form a coiled coil. The stretch at 806–934 (GLWEENAQLQ…KQLTEERRFH (129 aa)) forms a coiled coil. 2 stretches are compositionally biased toward polar residues: residues 994–1009 (SRIN…SLDP) and 1018–1030 (KPNQ…TATR). Residues 994–1050 (SRINAPPITTSPSLDPSPSCGRTYKPNQSTDAKTATRTPDGETAQAKEVQQKQGSPH) are disordered.

The protein belongs to the FAM184 family.

The sequence is that of Protein FAM184B (FAM184B) from Homo sapiens (Human).